The sequence spans 802 residues: MANTKKTTLDITGMTCAACSNRIEKKLNKLDDVNAQVNLTTEKATVEYNPDRHDVQEFINTIQHLGYGVAVETVELDITGMTCAACSSRIEKVLNKMDGVQNATVNLTTEQAKVDYYPEETDADKLVTRIQKLGYDASIKDNNRDQTSRKAEALQHKLIKLIISAVLSLPLLMLMFVHLFNMHIPALFTNPWFQFILATPVQFIIGWQFYVGAYKNLRNGGANMDVLVAVGTSAAYFYSIYEMVRWLNGSTTQPHLYFETSAVLITLILFGKYLEARAKSQTTNALGELLSLQAKEARILKDGNEVMIPLNEVHVGDTLIVKPGEKIPVDGKIIKGMTAIDESMLTGESIPVEKNVDDTVIGSTMNKNGTITMTATKVGGDTALANIIKVVEEAQSSKAPIQRLADIISGYFVPIVVGIALLTFIVWITLVTPGTFEPALVASISVLVIACPCALGLATPTSIMVGTGRAAENGILFKGGEFVERTHQIDTIVLDKTGTITNGCPVVTDYHGDDQTLQLLATAEKDSEHPLAEAIVNYAKEKQLTLTETTTFKAVPGHGIEATIDHHHILVGNRKLMADNDISLPKHISDDLTHYERDGKTAMLIAVNYSLTGIIAVADTVKDHAKDAIKQLHDMGIEVAMLTGDNKNTAQAIAKQVGIDTVIADILPEEKAAQITKLQQQGKKVAMVGDGVNDAPALVKADIGIAIGTGTEVAIEAADITILGGDLMLIPKAIYASKATIRNIRQNLFWAFGYNIAGIPIAALGLLAPWVAGAAMALSSVSVVTNALRLKKMRLEPRRKDA.

2 HMA domains span residues 5 to 70 (KKTT…YGVA) and 72 to 138 (ETVE…YDAS). Positions 16, 19, 83, and 86 each coordinate Cu(+). 6 helical membrane-spanning segments follow: residues 161-181 (LIISAVLSLPLLMLMFVHLFN), 192-212 (WFQFILATPVQFIIGWQFYVG), 224-244 (MDVLVAVGTSAAYFYSIYEMV), 256-276 (LYFETSAVLITLILFGKYLEA), 411-431 (YFVPIVVGIALLTFIVWITLV), and 438-458 (PALVASISVLVIACPCALGLA). Catalysis depends on D495, which acts as the 4-aspartylphosphate intermediate. Residues D690 and D694 each coordinate Mg(2+). 2 helical membrane passes run 748-767 (LFWAFGYNIAGIPIAALGLL) and 771-790 (VAGAAMALSSVSVVTNALRL).

This sequence belongs to the cation transport ATPase (P-type) (TC 3.A.3) family. Type IB subfamily.

It is found in the cell membrane. The catalysed reaction is Cu(+)(in) + ATP + H2O = Cu(+)(out) + ADP + phosphate + H(+). Functionally, involved in copper export. The sequence is that of Copper-exporting P-type ATPase (copA) from Staphylococcus aureus (strain MRSA252).